We begin with the raw amino-acid sequence, 583 residues long: Arginine--tRNA ligase (583 aa).

A 'HIGH' region motif is present at residues 131-141 (ANPTGPMHVGH).

It belongs to the class-I aminoacyl-tRNA synthetase family. In terms of assembly, monomer.

It is found in the cytoplasm. The catalysed reaction is tRNA(Arg) + L-arginine + ATP = L-arginyl-tRNA(Arg) + AMP + diphosphate. In Parvibaculum lavamentivorans (strain DS-1 / DSM 13023 / NCIMB 13966), this protein is Arginine--tRNA ligase.